A 39-amino-acid polypeptide reads, in one-letter code: Photosystem II reaction center protein J (39 aa).

A helical membrane pass occupies residues 7-27 (IPLWIVAVVAGLGVITVVGLF).

The protein belongs to the PsbJ family. In terms of assembly, PSII is composed of 1 copy each of membrane proteins PsbA, PsbB, PsbC, PsbD, PsbE, PsbF, PsbH, PsbI, PsbJ, PsbK, PsbL, PsbM, PsbT, PsbX, PsbY, PsbZ, Psb30/Ycf12, peripheral proteins PsbO, CyanoQ (PsbQ), PsbU, PsbV and a large number of cofactors. It forms dimeric complexes.

The protein localises to the cellular thylakoid membrane. Its function is as follows. One of the components of the core complex of photosystem II (PSII). PSII is a light-driven water:plastoquinone oxidoreductase that uses light energy to abstract electrons from H(2)O, generating O(2) and a proton gradient subsequently used for ATP formation. It consists of a core antenna complex that captures photons, and an electron transfer chain that converts photonic excitation into a charge separation. The polypeptide is Photosystem II reaction center protein J (Synechococcus sp. (strain JA-2-3B'a(2-13)) (Cyanobacteria bacterium Yellowstone B-Prime)).